We begin with the raw amino-acid sequence, 222 residues long: DNA mismatch repair protein MutH (222 aa).

It belongs to the MutH family.

The protein localises to the cytoplasm. Its function is as follows. Sequence-specific endonuclease that cleaves unmethylated GATC sequences. It is involved in DNA mismatch repair. This Pasteurella multocida (strain Pm70) protein is DNA mismatch repair protein MutH.